Consider the following 162-residue polypeptide: CASP-like protein 0U1 (162 aa).

The Cytoplasmic portion of the chain corresponds to 1–11 (MAAVEAAKTPR). Residues 12 to 32 (FILLIIEWVFALVAFAVMGHY) traverse the membrane as a helical segment. Topologically, residues 33–43 (LFDDRRSSFEY) are extracellular. Residues 44–64 (LTAICILVWLVVMIYMVILCC) form a helical membrane-spanning segment. Residues 65–69 (GRALP) lie on the Cytoplasmic side of the membrane. A helical membrane pass occupies residues 70–90 (PLIEAAIFLLFAILVFIAFLV). The Extracellular segment spans residues 91–123 (TAVKCNNSETIVIAGQTISRKVCEGESEPKAAA). N-linked (GlcNAc...) asparagine glycosylation is present at Asn96. A helical membrane pass occupies residues 124-144 (AFAFLLGLLLAGSSVLGCIAF). At 145–162 (RRPSAPPLSSFQNPTSSV) the chain is on the cytoplasmic side.

Belongs to the Casparian strip membrane proteins (CASP) family. Homodimer and heterodimers.

The protein localises to the cell membrane. This Chlorokybus atmophyticus (Soil alga) protein is CASP-like protein 0U1.